A 206-amino-acid polypeptide reads, in one-letter code: Large ribosomal subunit protein uL3 (206 aa).

The interval 127–151 (SGGPSSHGSKFHRHLGGTGQATTPA) is disordered.

Belongs to the universal ribosomal protein uL3 family. As to quaternary structure, part of the 50S ribosomal subunit. Forms a cluster with proteins L14 and L19.

One of the primary rRNA binding proteins, it binds directly near the 3'-end of the 23S rRNA, where it nucleates assembly of the 50S subunit. This chain is Large ribosomal subunit protein uL3, found in Borreliella burgdorferi (strain ATCC 35210 / DSM 4680 / CIP 102532 / B31) (Borrelia burgdorferi).